Consider the following 437-residue polypeptide: UDP-N-acetylmuramate--L-alanine ligase (437 aa).

An ATP-binding site is contributed by 114–120; the sequence is GTHGKTS.

The protein belongs to the MurCDEF family.

The protein resides in the cytoplasm. The enzyme catalyses UDP-N-acetyl-alpha-D-muramate + L-alanine + ATP = UDP-N-acetyl-alpha-D-muramoyl-L-alanine + ADP + phosphate + H(+). It participates in cell wall biogenesis; peptidoglycan biosynthesis. Its function is as follows. Cell wall formation. This chain is UDP-N-acetylmuramate--L-alanine ligase, found in Lactobacillus acidophilus (strain ATCC 700396 / NCK56 / N2 / NCFM).